The sequence spans 417 residues: Imidazolonepropionase (417 aa).

Residues His80 and His82 each coordinate Fe(3+). Residues His80 and His82 each coordinate Zn(2+). Residues Arg89, Tyr152, and His187 each coordinate 4-imidazolone-5-propanoate. Tyr152 is a binding site for N-formimidoyl-L-glutamate. Residue His252 participates in Fe(3+) binding. His252 contacts Zn(2+). Glu255 is a binding site for 4-imidazolone-5-propanoate. Residue Asp326 coordinates Fe(3+). Residue Asp326 coordinates Zn(2+). 2 residues coordinate N-formimidoyl-L-glutamate: Asn328 and Gly330. Ser331 provides a ligand contact to 4-imidazolone-5-propanoate.

Belongs to the metallo-dependent hydrolases superfamily. HutI family. It depends on Zn(2+) as a cofactor. The cofactor is Fe(3+).

Its subcellular location is the cytoplasm. The enzyme catalyses 4-imidazolone-5-propanoate + H2O = N-formimidoyl-L-glutamate. It functions in the pathway amino-acid degradation; L-histidine degradation into L-glutamate; N-formimidoyl-L-glutamate from L-histidine: step 3/3. Catalyzes the hydrolytic cleavage of the carbon-nitrogen bond in imidazolone-5-propanoate to yield N-formimidoyl-L-glutamate. It is the third step in the universal histidine degradation pathway. The polypeptide is Imidazolonepropionase (Bacteroides fragilis (strain YCH46)).